A 301-amino-acid polypeptide reads, in one-letter code: MSWIVNKQSSQEELAGRFRKLMSAPDILQIPGAHDGMAALLAKEAGFSAIYLSGAAYTASRGLPDLGIITSAEIAERAKDLVRAADLPLLVDIDTGFGGVLNAARTAREMLEARVAAVQMEDQQLPKKCGHLNGKQLVPIKEMAQKIKAIKQAAPSLIVVARTDARAQEGLDAAIKRSEAYIEAGADAIFPEALQAENEFRQFAERIPVPLLANMTEFGKTPYYRADEFEDMGFHMVIYPVTSLRAAAKACERMFGLMKEHGSQKEGLHDMQTRKELYDTISYYDYEALDKTIAKTVLPDE.

53 to 55 (SGA) provides a ligand contact to substrate. Mg(2+) is bound by residues Asp92 and Asp94. Residues 129–130 (CG), Arg162, Glu192, 214–216 (NMT), Arg245, and Arg274 each bind substrate.

Belongs to the isocitrate lyase/PEP mutase superfamily. Methylisocitrate lyase family. Requires Mg(2+) as cofactor.

It carries out the reaction 3-hydroxybutane-1,2,3-tricarboxylate = pyruvate + succinate. Involved in the methylcitric acid cycle. Catalyzes the cleavage of 2-methylisocitrate to yield pyruvate and succinate. In Bacillus subtilis (strain 168), this protein is 2-methylisocitrate lyase.